Consider the following 311-residue polypeptide: Pyrimidine-specific ribonucleoside hydrolase RihA (311 aa).

The active site involves His-240.

The protein belongs to the IUNH family. RihA subfamily.

Hydrolyzes with equal efficiency cytidine or uridine to ribose and cytosine or uracil, respectively. This chain is Pyrimidine-specific ribonucleoside hydrolase RihA, found in Escherichia coli O81 (strain ED1a).